We begin with the raw amino-acid sequence, 115 residues long: UPF0102 protein Swol_1475 (115 aa).

It belongs to the UPF0102 family.

This Syntrophomonas wolfei subsp. wolfei (strain DSM 2245B / Goettingen) protein is UPF0102 protein Swol_1475.